Consider the following 166-residue polypeptide: Small ribosomal subunit protein bS18m (166 aa).

Residues 1–31 (MLGRRIFSPAPNRGFILCNLIQSNNSTRRGF) constitute a mitochondrion transit peptide. Residues 29-48 (RGFSDNRKFNERNSEASSNV) form a disordered region. The segment covering 30 to 42 (GFSDNRKFNERNS) has biased composition (basic and acidic residues).

It belongs to the bacterial ribosomal protein bS18 family. Component of the mitochondrial small ribosomal subunit (mt-SSU). Mature yeast 74S mitochondrial ribosomes consist of a small (37S) and a large (54S) subunit. The 37S small subunit contains a 15S ribosomal RNA (15S mt-rRNA) and at least 32 different proteins. The 54S large subunit contains a 21S rRNA (21S mt-rRNA) and at least 45 different proteins.

The protein localises to the mitochondrion. Component of the mitochondrial ribosome (mitoribosome), a dedicated translation machinery responsible for the synthesis of mitochondrial genome-encoded proteins, including at least some of the essential transmembrane subunits of the mitochondrial respiratory chain. The mitoribosomes are attached to the mitochondrial inner membrane and translation products are cotranslationally integrated into the membrane. The protein is Small ribosomal subunit protein bS18m (rsm18) of Schizosaccharomyces pombe (strain 972 / ATCC 24843) (Fission yeast).